The sequence spans 128 residues: Large ribosomal subunit protein bL17 (128 aa).

It belongs to the bacterial ribosomal protein bL17 family. As to quaternary structure, part of the 50S ribosomal subunit. Contacts protein L32.

This chain is Large ribosomal subunit protein bL17, found in Streptococcus sanguinis (strain SK36).